The sequence spans 570 residues: Ferroportin (570 aa).

Over 1–23 (MTKARDQTHQEGCCGSLANYLTS) the chain is Cytoplasmic. Residues 24-53 (AKFLLYLGHSLSTWGDRMWHFAVSVFLVEL) form a helical membrane-spanning segment. Fe cation contacts are provided by Asp-39 and His-43. Topologically, residues 54–57 (YGNS) are extracellular. The helical transmembrane segment at 58-84 (LLLTAVYGLVVAGSVLVLGAIIGDWVD) threads the bilayer. Topologically, residues 85 to 87 (KNA) are cytoplasmic. Residues 88-118 (RLKVAQTSLVVQNVSVILCGIILMMVFLHKN) form a helical membrane-spanning segment. At 119-126 (ELLTMYHG) the chain is on the extracellular side. The chain crosses the membrane as a helical span at residues 127-162 (WVLTVCYILIITIANIANLASTATAITIQRDWIVVV). At 163-164 (AG) the chain is on the cytoplasmic side. A helical membrane pass occupies residues 165-195 (ENRSRLADMNATIRRIDQLTNILAPMAVGQI). Residues 196-202 (MTFGSPV) are Extracellular-facing. The helical transmembrane segment at 203–229 (IGCGFISGWNLVSMCVEYFLLWKVYQK) threads the bilayer. Topologically, residues 230–306 (TPALAVKAAL…DGWVSYYNQP (77 aa)) are cytoplasmic. A helical transmembrane segment spans residues 307-333 (VFLAGMGLAFLYMTVLGFDCITTGYAY). Cys-326 lines the Fe cation pocket. Residues 334–338 (TQGLS) are Extracellular-facing. Residues 339–366 (GSILSILMGASAITGIMGTVAFTWLRRK) traverse the membrane as a helical segment. Over 367–368 (CG) the chain is Cytoplasmic. Residues 369–391 (LVRTGLFSGLAQLSCLILCVISV) form a helical membrane-spanning segment. Residues 392–452 (FMPGSPLDLS…EMSTKPIPIV (61 aa)) are Extracellular-facing. Asn-437 is a glycosylation site (N-linked (GlcNAc...) asparagine). The chain crosses the membrane as a helical span at residues 453-482 (SVSLLFAGVIAARIGLWSFDLTVTQLLQEN). At 483–487 (VIESE) the chain is on the cytoplasmic side. A helical transmembrane segment spans residues 488 to 512 (RGIINGVQNSMNYLLDLLHFIMVIL). His-506 serves as a coordination point for Fe cation. Residues 513–515 (APN) lie on the Extracellular side of the membrane. The chain crosses the membrane as a helical span at residues 516–541 (PEAFGLLVLISVSFVAMGHLMYFRFA). The Cytoplasmic portion of the chain corresponds to 542–570 (QKTLGNQIFVCGPDEKEVTDENQPNTSVV).

Belongs to the ferroportin (FP) (TC 2.A.100) family. SLC40A subfamily. Identified in a complex with STOM. Interacts with HAMP; affinity of the peptide hormone HAMP for SLC40A1 increases by 80-fold in the presence of iron and the interaction promotes SLC40A1 ubiquitination and degradation. Part of a complex composed of SLC40A1/ferroportin, TF/transferrin and HEPH/hephaestin that transfers iron from cells to transferrin. Polyubiquitinated by RNF217; leading to proteasomal degradation. Under conditions of high systemic iron levels, both the hormone peptide hepcidin/HAMP and holo(iron bound)-transferrin/TF induce the ubiquitination, internalization and proteasomal degradation of SLC40A1 to control iron release from cells. In terms of tissue distribution, high expression in spleen, liver, kidney, heart and duodenum.

The protein localises to the cell membrane. It is found in the basolateral cell membrane. It carries out the reaction Fe(2+)(in) = Fe(2+)(out). Transports Fe(2+) from the inside of a cell to the outside of the cell, playing a key role for maintaining systemic iron homeostasis. Transports iron from intestinal, splenic, hepatic cells, macrophages and erythrocytes into the blood to provide iron to other tissues. Controls therefore dietary iron uptake, iron recycling by macrophages and erythrocytes, and release of iron stores in hepatocytes. When iron is in excess in serum, circulating HAMP/hepcidin levels increase resulting in a degradation of SLC40A1, thus limiting the iron efflux to plasma. This chain is Ferroportin, found in Mus musculus (Mouse).